The primary structure comprises 76 residues: U-scoloptoxin(15)-Ssd3b (76 aa).

Residues 1–23 (MEKKIIFLCFLVALLTFPEFISS) form the signal peptide.

Contains 2 disulfide bonds. Expressed by the venom gland.

The protein localises to the secreted. This chain is U-scoloptoxin(15)-Ssd3b, found in Scolopendra dehaani (Thai centipede).